Consider the following 248-residue polypeptide: NADP-dependent 3-hydroxy acid dehydrogenase YdfG (248 aa).

NADP(+)-binding positions include 7–12, 32–33, 54–55, and Asn-81; these read GATAGF, RR, and DV. Position 134 (Ser-134) interacts with substrate. Residues Tyr-147, Lys-151, and 177–185 each bind NADP(+); that span reads PGLVGGTEF. Tyr-147 acts as the Proton acceptor in catalysis.

This sequence belongs to the short-chain dehydrogenases/reductases (SDR) family. Homotetramer.

It carries out the reaction 3-hydroxypropanoate + NADP(+) = 3-oxopropanoate + NADPH + H(+). The enzyme catalyses L-allo-threonine + NADP(+) = aminoacetone + CO2 + NADPH. In terms of biological role, NADP-dependent dehydrogenase with broad substrate specificity acting on 3-hydroxy acids. Catalyzes the NADP-dependent oxidation of L-allo-threonine to L-2-amino-3-keto-butyrate, which is spontaneously decarboxylated into aminoacetone. Also acts on D-threonine, L-serine, D-serine, D-3-hydroxyisobutyrate, L-3-hydroxyisobutyrate, D-glycerate and L-glycerate. Able to catalyze the reduction of the malonic semialdehyde to 3-hydroxypropionic acid. YdfG is apparently supplementing RutE, the presumed malonic semialdehyde reductase involved in pyrimidine degradation since both are able to detoxify malonic semialdehyde. This Salmonella typhi protein is NADP-dependent 3-hydroxy acid dehydrogenase YdfG.